Reading from the N-terminus, the 849-residue chain is SMY2 homolog 2 (849 aa).

The region spanning 149-205 is the GYF domain; that stretch reads ESQWKYIDSNGNIQGPFGTNNMSQWYQGGYFTPTLQICRLATSPEPFGVNDRFIRLG. 4 disordered regions span residues 305 to 505, 527 to 547, 593 to 612, and 634 to 661; these read APLS…TTNL, DLKK…QLDR, TKIN…IKPD, and NRAS…NTSN. Residues 308-318 are compositionally biased toward low complexity; sequence STTSSRSNKTT. Positions 319 to 331 are enriched in basic and acidic residues; the sequence is SSHEEKVPSHEEA. Threonine 350 is modified (phosphothreonine). Basic and acidic residues-rich tracts occupy residues 361-375, 387-403, and 425-443; these read TKQE…KEQN, VDRK…KSKD, and LLEE…EEQR. The stretch at 410 to 484 forms a coiled coil; it reads EEQKRFAKAE…EKQKELLNNI (75 aa). A compositionally biased stretch (basic residues) spans 444-455; that stretch reads KLKKEKKLKQKQ. Residues 456–479 are compositionally biased toward basic and acidic residues; the sequence is KKEEEKLKKKKKEEGKLEKEKQKE. Residues 483 to 505 are compositionally biased toward polar residues; it reads NILTGDTETPSSENTATSITTNL. Residues 594-605 show a composition bias toward polar residues; it reads KINSQSKINKAN. Low complexity predominate over residues 644–661; the sequence is SRTPSPSSSALNSSNTSN.

Belongs to the SMY2/mpd2 family. As to quaternary structure, interacts with ribosomes. Interacts with EAP1 and MSL5 (via the GYP domain).

It is found in the cytoplasm. This chain is SMY2 homolog 2 (SYH1), found in Saccharomyces cerevisiae (strain ATCC 204508 / S288c) (Baker's yeast).